Here is a 307-residue protein sequence, read N- to C-terminus: Ornithine carbamoyltransferase (307 aa).

Carbamoyl phosphate-binding positions include 51–54, Q78, R102, and 129–132; these read STRT and HPVQ. L-ornithine is bound by residues N159, D223, and 227–228; that span reads SM. Residues 263-264 and R291 each bind carbamoyl phosphate; that span reads CL.

It belongs to the aspartate/ornithine carbamoyltransferase superfamily. OTCase family.

The protein localises to the cytoplasm. The enzyme catalyses carbamoyl phosphate + L-ornithine = L-citrulline + phosphate + H(+). The protein operates within amino-acid biosynthesis; L-arginine biosynthesis; L-arginine from L-ornithine and carbamoyl phosphate: step 1/3. Reversibly catalyzes the transfer of the carbamoyl group from carbamoyl phosphate (CP) to the N(epsilon) atom of ornithine (ORN) to produce L-citrulline. In Wolinella succinogenes (strain ATCC 29543 / DSM 1740 / CCUG 13145 / JCM 31913 / LMG 7466 / NCTC 11488 / FDC 602W) (Vibrio succinogenes), this protein is Ornithine carbamoyltransferase.